A 159-amino-acid polypeptide reads, in one-letter code: Betainyl-CoA thioesterase (159 aa).

This sequence belongs to the betainyl-CoA thioesterase family.

The enzyme catalyses N,N,N-trimethylglycyl-CoA + H2O = glycine betaine + CoA + H(+). It participates in amine and polyamine metabolism; carnitine metabolism. In terms of biological role, catalyzes the cleavage of betainyl-CoA (N,N,N-trimethylglycyl-CoA) into glycine betaine and coenzyme A. Is involved in a L-carnitine degradation pathway that allows P.aeruginosa to grow on L-carnitine as the sole source of carbon and nitrogen. This Pseudomonas aeruginosa (strain ATCC 15692 / DSM 22644 / CIP 104116 / JCM 14847 / LMG 12228 / 1C / PRS 101 / PAO1) protein is Betainyl-CoA thioesterase.